We begin with the raw amino-acid sequence, 382 residues long: D-galactonate dehydratase (382 aa).

Mg(2+) is bound at residue Asp183. His185 serves as the catalytic Proton donor. Mg(2+)-binding residues include Glu209 and Glu235. Residue His285 is the Proton acceptor of the active site.

Belongs to the mandelate racemase/muconate lactonizing enzyme family. GalD subfamily. Requires Mg(2+) as cofactor.

It carries out the reaction D-galactonate = 2-dehydro-3-deoxy-D-galactonate + H2O. It participates in carbohydrate acid metabolism; D-galactonate degradation; D-glyceraldehyde 3-phosphate and pyruvate from D-galactonate: step 1/3. Functionally, catalyzes the dehydration of D-galactonate to 2-keto-3-deoxy-D-galactonate. This is D-galactonate dehydratase from Cronobacter sakazakii (strain ATCC BAA-894) (Enterobacter sakazakii).